The following is a 187-amino-acid chain: CASP-like protein 2C1 (187 aa).

Topologically, residues 1 to 14 are cytoplasmic; that stretch reads MVAAARVVSGVKAE. A helical transmembrane segment spans residues 15–35; it reads GLLRGACAALAAAAALLLGLS. At 36-54 the chain is on the extracellular side; sequence TQTETVLLVRKKGTVKDVQ. A helical transmembrane segment spans residues 55–75; it reads ALWVLAMAAASAAGYHLLQLL. Topologically, residues 76 to 97 are cytoplasmic; it reads KCLYLGRGGGRALAWTCLLLDK. A helical membrane pass occupies residues 98-118; that stretch reads ACAYATFATTVAAAQACVVAL. Residues 119–139 are Extracellular-facing; that stretch reads DGAHALQWTKLCNIYTRFCEQ. The helical transmembrane segment at 140–160 threads the bilayer; it reads VAGSLVLGMLAAVGTAVLSAA. The Cytoplasmic segment spans residues 161–187; sequence SARNVFRHYYCSSHSPPAPPPETCDAH.

It belongs to the Casparian strip membrane proteins (CASP) family. As to quaternary structure, homodimer and heterodimers.

Its subcellular location is the cell membrane. This is CASP-like protein 2C1 from Zea mays (Maize).